The chain runs to 447 residues: Argininosuccinate synthase (447 aa).

Residues 17-25 (AFSGGLDTS) and alanine 43 each bind ATP. Tyrosine 99 is an L-citrulline binding site. ATP is bound by residues glycine 129 and threonine 131. Residues threonine 131, asparagine 135, and aspartate 136 each contribute to the L-aspartate site. Asparagine 135 lines the L-citrulline pocket. Residue aspartate 136 participates in ATP binding. Arginine 139 and serine 192 together coordinate L-citrulline. Residue aspartate 194 coordinates ATP. Residues threonine 201, glutamate 203, and glutamate 280 each contribute to the L-citrulline site.

This sequence belongs to the argininosuccinate synthase family. Type 2 subfamily. As to quaternary structure, homotetramer.

The protein resides in the cytoplasm. It catalyses the reaction L-citrulline + L-aspartate + ATP = 2-(N(omega)-L-arginino)succinate + AMP + diphosphate + H(+). It participates in amino-acid biosynthesis; L-arginine biosynthesis; L-arginine from L-ornithine and carbamoyl phosphate: step 2/3. The sequence is that of Argininosuccinate synthase from Paracidovorax citrulli (strain AAC00-1) (Acidovorax citrulli).